Here is a 612-residue protein sequence, read N- to C-terminus: UvrABC system protein C (612 aa).

In terms of domain architecture, GIY-YIG spans histidine 21 to valine 99. In terms of domain architecture, UVR spans glutamine 208–threonine 243.

This sequence belongs to the UvrC family. As to quaternary structure, interacts with UvrB in an incision complex.

Its subcellular location is the cytoplasm. The UvrABC repair system catalyzes the recognition and processing of DNA lesions. UvrC both incises the 5' and 3' sides of the lesion. The N-terminal half is responsible for the 3' incision and the C-terminal half is responsible for the 5' incision. The protein is UvrABC system protein C of Idiomarina loihiensis (strain ATCC BAA-735 / DSM 15497 / L2-TR).